Consider the following 127-residue polypeptide: Fluoride-specific ion channel FluC (127 aa).

Transmembrane regions (helical) follow at residues 7 to 27 (VYVALGGALGAVSRYLIVAWV), 38 to 58 (GTLAVNLLGSFLLGTAFVYVV), 70 to 90 (LIMVGFLGALTTFSTFSLEAW), and 102 to 122 (LAYILMSVILCLFAVSAGIAL). G77 and T80 together coordinate Na(+).

The protein belongs to the fluoride channel Fluc/FEX (TC 1.A.43) family.

Its subcellular location is the cell inner membrane. The catalysed reaction is fluoride(in) = fluoride(out). Its activity is regulated as follows. Na(+) is not transported, but it plays an essential structural role and its presence is essential for fluoride channel function. Functionally, fluoride-specific ion channel. Important for reducing fluoride concentration in the cell, thus reducing its toxicity. This Hahella chejuensis (strain KCTC 2396) protein is Fluoride-specific ion channel FluC.